The primary structure comprises 904 residues: Protein translocase subunit SecA (904 aa).

ATP is bound by residues glutamine 89, 107 to 111, and aspartate 496; that span reads GEGKT. The disordered stretch occupies residues 870–904; sequence GGFQELSSGTPSPTVTVTTSSGGGTERKTSRRRKR. Low complexity predominate over residues 876–889; sequence SSGTPSPTVTVTTS.

It belongs to the SecA family. In terms of assembly, monomer and homodimer. Part of the essential Sec protein translocation apparatus which comprises SecA, SecYEG and auxiliary proteins SecDF. Other proteins may also be involved.

Its subcellular location is the cell inner membrane. The protein resides in the cytoplasm. It carries out the reaction ATP + H2O + cellular proteinSide 1 = ADP + phosphate + cellular proteinSide 2.. Its function is as follows. Part of the Sec protein translocase complex. Interacts with the SecYEG preprotein conducting channel. Has a central role in coupling the hydrolysis of ATP to the transfer of proteins into and across the cell membrane, serving as an ATP-driven molecular motor driving the stepwise translocation of polypeptide chains across the membrane. In Leptospira borgpetersenii serovar Hardjo-bovis (strain L550), this protein is Protein translocase subunit SecA.